The chain runs to 298 residues: tRNA dimethylallyltransferase (298 aa).

16 to 23 provides a ligand contact to ATP; that stretch reads GPTASGKS. Position 18–23 (18–23) interacts with substrate; that stretch reads TASGKS. Interaction with substrate tRNA stretches follow at residues 41 to 44 and 165 to 169; these read DSMQ and QRIVR.

Belongs to the IPP transferase family. As to quaternary structure, monomer. Mg(2+) serves as cofactor.

It carries out the reaction adenosine(37) in tRNA + dimethylallyl diphosphate = N(6)-dimethylallyladenosine(37) in tRNA + diphosphate. Its function is as follows. Catalyzes the transfer of a dimethylallyl group onto the adenine at position 37 in tRNAs that read codons beginning with uridine, leading to the formation of N6-(dimethylallyl)adenosine (i(6)A). This chain is tRNA dimethylallyltransferase, found in Rhizobium radiobacter (Agrobacterium tumefaciens).